A 217-amino-acid chain; its full sequence is Octanoyltransferase (217 aa).

The BPL/LPL catalytic domain occupies 32–207 (SESPDELWIV…TFSQLLGYQH (176 aa)). Substrate-binding positions include 71 to 78 (RGGQVTYH), 138 to 140 (SLG), and 151 to 153 (GLA). C169 functions as the Acyl-thioester intermediate in the catalytic mechanism.

This sequence belongs to the LipB family.

The protein localises to the cytoplasm. It carries out the reaction octanoyl-[ACP] + L-lysyl-[protein] = N(6)-octanoyl-L-lysyl-[protein] + holo-[ACP] + H(+). Its pathway is protein modification; protein lipoylation via endogenous pathway; protein N(6)-(lipoyl)lysine from octanoyl-[acyl-carrier-protein]: step 1/2. Catalyzes the transfer of endogenously produced octanoic acid from octanoyl-acyl-carrier-protein onto the lipoyl domains of lipoate-dependent enzymes. Lipoyl-ACP can also act as a substrate although octanoyl-ACP is likely to be the physiological substrate. This chain is Octanoyltransferase, found in Shewanella sp. (strain W3-18-1).